A 422-amino-acid polypeptide reads, in one-letter code: Dihydroorotase (422 aa).

2 residues coordinate Zn(2+): histidine 59 and histidine 61. Substrate-binding positions include 61–63 and asparagine 93; that span reads HFR. 3 residues coordinate Zn(2+): aspartate 150, histidine 177, and histidine 230. Asparagine 276 contributes to the substrate binding site. Residue aspartate 303 coordinates Zn(2+). Aspartate 303 is a catalytic residue. Histidine 307 is a substrate binding site.

It belongs to the metallo-dependent hydrolases superfamily. DHOase family. Class I DHOase subfamily. Requires Zn(2+) as cofactor.

The enzyme catalyses (S)-dihydroorotate + H2O = N-carbamoyl-L-aspartate + H(+). Its pathway is pyrimidine metabolism; UMP biosynthesis via de novo pathway; (S)-dihydroorotate from bicarbonate: step 3/3. In terms of biological role, catalyzes the reversible cyclization of carbamoyl aspartate to dihydroorotate. The sequence is that of Dihydroorotase from Streptococcus pyogenes serotype M3 (strain ATCC BAA-595 / MGAS315).